Here is a 726-residue protein sequence, read N- to C-terminus: AP-1 complex subunit beta-1 (726 aa).

This sequence belongs to the adaptor complexes large subunit family. Adaptor protein complex 1 (AP-1) is a heterotetramer composed of two large adaptins (gamma-type subunit APL4 and beta-type subunit APL2), a medium adaptin (mu-type subunit APM1) and a small adaptin (sigma-type subunit APS1). Interacts with CHC1. Interacts with APM2, probably forming an alternative AP-1-like complex.

The protein localises to the cell membrane. It localises to the membrane. The protein resides in the coated pit. Its function is as follows. Adaptins are components of the adaptor complexes which link clathrin to receptors in coated vesicles. Clathrin-associated protein complexes are believed to interact with the cytoplasmic tails of membrane proteins, leading to their selection and concentration. The AP-1 complex interacts directly with clathrin. This Saccharomyces cerevisiae (strain ATCC 204508 / S288c) (Baker's yeast) protein is AP-1 complex subunit beta-1 (APL2).